The following is a 376-amino-acid chain: Erythronate-4-phosphate dehydrogenase (376 aa).

2 residues coordinate substrate: Ser45 and Thr67. NAD(+) contacts are provided by residues Asp147, 209–211 (ASR), and Asp235. Arg211 is an active-site residue. Residue Glu240 is part of the active site. The active-site Proton donor is His257. Gly260 provides a ligand contact to NAD(+). Residue Tyr261 coordinates substrate.

Belongs to the D-isomer specific 2-hydroxyacid dehydrogenase family. PdxB subfamily. Homodimer.

It is found in the cytoplasm. It catalyses the reaction 4-phospho-D-erythronate + NAD(+) = (R)-3-hydroxy-2-oxo-4-phosphooxybutanoate + NADH + H(+). It participates in cofactor biosynthesis; pyridoxine 5'-phosphate biosynthesis; pyridoxine 5'-phosphate from D-erythrose 4-phosphate: step 2/5. In terms of biological role, catalyzes the oxidation of erythronate-4-phosphate to 3-hydroxy-2-oxo-4-phosphonooxybutanoate. The polypeptide is Erythronate-4-phosphate dehydrogenase (Aeromonas hydrophila subsp. hydrophila (strain ATCC 7966 / DSM 30187 / BCRC 13018 / CCUG 14551 / JCM 1027 / KCTC 2358 / NCIMB 9240 / NCTC 8049)).